The chain runs to 373 residues: MLIPFSMKNCFQLLCNCQVPAAGFKKTVKNGLILQSISNDVYQNLAVEDWIHDHMNLEGKPILFFWQNSPSVVIGRHQNPWQECNLNLMREEGIKLARRRSGGGTVYHDMGNINLTFFTTKKKYDRMENLKLIVRALNAVQPQLDVQATKRFDLLLDGQFKISGTASKIGRTTAYHHCTLLCSTDGTFLSSLLKSPYQGIRSNATASIPSLVKNLLEKDPTLTCEVLMNAVATEYAAYHQIDNHIHLINPTDETLFPGINSKAKELQTWEWIYGKTPKFSINTSFHVLYEQSHLEIKVFIDIKNGRIEICNIEAPDHWLPLEIRDKLNSSLIGSKFCPTETTMLTNILLRTCPQDHKLNSKWNILCEKIKGIM.

Residues 1–25 (MLIPFSMKNCFQLLCNCQVPAAGFK) constitute a mitochondrion transit peptide. A BPL/LPL catalytic domain is found at 57-243 (LEGKPILFFW…EYAAYHQIDN (187 aa)). The (R)-lipoyl-5'-AMP site is built by Tyr107, Arg151, Lys161, and Thr179.

Belongs to the LplA family. As to expression, highly expressed in skeletal muscle and heart, moderately in kidney and pancreas, and detected at lower levels in liver, brain, placenta and lung.

The protein resides in the mitochondrion. It catalyses the reaction N(6)-[(R)-lipoyl]-L-lysyl-[glycine-cleavage complex H protein] + L-lysyl-[lipoyl-carrier protein] = L-lysyl-[glycine-cleavage complex H protein] + N(6)-[(R)-lipoyl]-L-lysyl-[lipoyl-carrier protein]. The enzyme catalyses (R)-lipoyl-5'-AMP + L-lysyl-[lipoyl-carrier protein] = N(6)-[(R)-lipoyl]-L-lysyl-[lipoyl-carrier protein] + AMP + 2 H(+). It participates in protein modification; protein lipoylation via exogenous pathway; protein N(6)-(lipoyl)lysine from lipoate: step 2/2. In terms of biological role, lipoyl amidotransferase that catalyzes the transfer of lipoyl moieties from lipoyl-protein H of the glycine cleavage system (lipoyl-GCSH) to E2 subunits of the pyruvate dehydrogenase complex (PDCE2). Unable to catalyze the transfer of octanoyl from octanoyl-GCSH to PDCE2. In vitro, it is also able to catalyze the transfer of the lipoyl group from lipoyl-AMP to the specific lysine residue of lipoyl domains of lipoate-dependent enzymes but this reaction may not be physiologically relevant. This Homo sapiens (Human) protein is Lipoyl amidotransferase LIPT1, mitochondrial.